Reading from the N-terminus, the 322-residue chain is Beta-1,4-galactosyltransferase 7 (322 aa).

At 1-9 (MVNISTINW) the chain is on the cytoplasmic side. Residues 10–30 (VFVCGLSFCLGGIAVLSLMPL) traverse the membrane as a helical; Signal-anchor for type II membrane protein segment. Residues 31-322 (GSDCVCPLSN…TAAAASAVQT (292 aa)) lie on the Lumenal side of the membrane. Residues Pro-82, Arg-84, Asp-145, and Val-146 each coordinate UDP-alpha-D-galactose. Asp-147 contacts Mn(2+). Residues Tyr-177, Gly-185, Trp-207, and Gly-208 each coordinate UDP-alpha-D-galactose. Leu-209 serves as a coordination point for beta-D-xylose. Glu-210 contacts UDP-alpha-D-galactose. 2 residues coordinate beta-D-xylose: Asp-211 and Asp-212. Residue Asn-236 is glycosylated (N-linked (GlcNAc...) asparagine). Residues His-241, His-243, and Arg-250 each contribute to the UDP-alpha-D-galactose site. His-241 and His-243 together coordinate Mn(2+). 2 disulfides stabilise this stretch: Cys-255–Cys-310 and Cys-300–Cys-308.

Belongs to the glycosyltransferase 7 family. Mn(2+) serves as cofactor. As to expression, expressed in male and female adults. Expressed in head.

The protein localises to the golgi apparatus membrane. The catalysed reaction is 3-O-(beta-D-xylosyl)-L-seryl-[protein] + UDP-alpha-D-galactose = 3-O-(beta-D-galactosyl-(1-&gt;4)-beta-D-xylosyl)-L-seryl-[protein] + UDP + H(+). It functions in the pathway protein modification; protein glycosylation. Functionally, transfers galactose from UDP-D-Galactose (UDP-Gal) to the acceptor xylose residue in the linkage tetrasaccharide region of the glycosaminoglycan side chain of proteoglycans. No activity towards beta-GlcNAc, beta-Glc, beta-Gal, and beta-GalNAc as acceptors. The chain is Beta-1,4-galactosyltransferase 7 from Drosophila melanogaster (Fruit fly).